A 462-amino-acid polypeptide reads, in one-letter code: MDRCIYGCSVITIFFSFFFLLNASALESGHHNITGSGQINSNSVLVALLDSRYTELAELVEKALLLQTLEDAVGRHNITIFAPRNEALERDLDPDFKRFLLQPGNLKSLQTLLLSHIIPKRVGSNQWPEENSGRVKHVTLGHDQVLHLSKLKGTNGKRLVNSAVITRPDDLTRPDGLIHGIERLLIPRSVQEDFNRRRNLRSISAVLPEGAPEIDPRTNRLKKSATAVSVPAGSPPVLPIESAMAPGPSLAPAPAPGPGGAHKHFNGDAQVKDFIHTLLHYGGYNEMADILVNLTSLATEMGRLVSEGYVLTVLAPNDEAMGKLTTDQLSEPGAPEQIMYYHIIPEYQTEESMYNSVRRFGKVKYETLRFPHKVGAKEADGSVKFGSGDRSAYLFDPDIYTDGRISVQGIDGVLFPEEKEEETVKKPTGPVKKVVQPRRGKLLEVACSMLGAIGKDSYLSRC.

The first 25 residues, 1-25 (MDRCIYGCSVITIFFSFFFLLNASA), serve as a signal peptide directing secretion. Residues Asn32, Asn77, and Asn293 are each glycosylated (N-linked (GlcNAc...) asparagine). 2 consecutive FAS1 domains span residues 40-185 (NSNS…ERLL) and 271-414 (VKDF…DGVL).

This sequence belongs to the fasciclin-like AGP family.

It is found in the secreted. In terms of biological role, may be a cell surface adhesion protein. In Arabidopsis thaliana (Mouse-ear cress), this protein is Fasciclin-like arabinogalactan protein 18 (FLA18).